We begin with the raw amino-acid sequence, 212 residues long: Redox-sensing transcriptional repressor Rex (212 aa).

A DNA-binding region (H-T-H motif) is located at residues 17–56; the sequence is LYARSLRYLLEEGVHSVSSQELGERINVTAAQIRKDLSYF. Position 91 to 96 (91 to 96) interacts with NAD(+); that stretch reads GIGLLG.

Belongs to the transcriptional regulatory Rex family. In terms of assembly, homodimer.

Its subcellular location is the cytoplasm. Functionally, modulates transcription in response to changes in cellular NADH/NAD(+) redox state. The protein is Redox-sensing transcriptional repressor Rex of Chloroflexus aurantiacus (strain ATCC 29366 / DSM 635 / J-10-fl).